The sequence spans 582 residues: MSRGDKMLKFEIKARDGAGRIGKLEVNGKKIETPAIMPVVNPKQMVVEPKELEKMGFEIIITNSYIIYKDEELRRKALELGIHRMLDYNGIIEVDSGSFQLMKYGSIEVSNREIIEFQHRIGVDIGTFLDIPTPPDAPREQAVKELEITLSRAREAEEIKEIPMNATIQGSTYTDLRRYAARRLSSMNFEIHPIGGVVPLLESYRFRDVVDIVISSKMALRPDRPVHLFGAGHPIVFALAVAMGVDLFDSASYALYAKDDRYMTPEGTKRLDELDYFPCSCPVCSKYTPQELREMPKEERTRLLALHNLWVIKEEIKRVKQAIKEGELWRLVDERARSHPKLYSAYKRLLEHYTFLEEFEPITKKSALFKISNESLRWPVVRRAKERAKSINERFGELVEHPIFGRVSRYLSLTYPFAQSEAEDDFKIEKPTKEDAIKYVMAIAEYQFGEGASRAFDDAKVELSKTGMPRQVKVNGKRLATVRADDGLLTLGIEGAKRLHRVLPYPRMRVVVNKEAEPFARKGKDVFAKFVIFADPGIRPYDEVLVVNENDELLATGQALLSGREMIVFQYGRAVKVRKGVE.

Asp95 acts as the Nucleophile in catalysis. Residues Asp130 and Gly196 each coordinate substrate. Zn(2+) is bound by residues Cys279, Cys281, and Cys284. Residues 507-582 enclose the PUA domain; it reads RMRVVVNKEA…RAVKVRKGVE (76 aa).

The protein belongs to the archaeosine tRNA-ribosyltransferase family. Homodimer. Zn(2+) is required as a cofactor.

The enzyme catalyses guanosine(15) in tRNA + 7-cyano-7-deazaguanine = 7-cyano-7-carbaguanosine(15) in tRNA + guanine. It participates in tRNA modification; archaeosine-tRNA biosynthesis. Functionally, exchanges the guanine residue with 7-cyano-7-deazaguanine (preQ0) at position 15 in the dihydrouridine loop (D-loop) of archaeal tRNAs. This chain is tRNA-guanine(15) transglycosylase (tgtA), found in Pyrococcus horikoshii (strain ATCC 700860 / DSM 12428 / JCM 9974 / NBRC 100139 / OT-3).